A 194-amino-acid polypeptide reads, in one-letter code: NADH-quinone oxidoreductase subunit B (194 aa).

Polar residues predominate over residues 1–11; it reads MGMSQNNSTLV. A disordered region spans residues 1–22; the sequence is MGMSQNNSTLVAPQPKGIIDPA. 4 residues coordinate [4Fe-4S] cluster: cysteine 72, cysteine 73, cysteine 138, and cysteine 168.

It belongs to the complex I 20 kDa subunit family. NDH-1 is composed of 14 different subunits. Subunits NuoB, C, D, E, F, and G constitute the peripheral sector of the complex. [4Fe-4S] cluster is required as a cofactor.

The protein localises to the cell inner membrane. The catalysed reaction is a quinone + NADH + 5 H(+)(in) = a quinol + NAD(+) + 4 H(+)(out). NDH-1 shuttles electrons from NADH, via FMN and iron-sulfur (Fe-S) centers, to quinones in the respiratory chain. The immediate electron acceptor for the enzyme in this species is believed to be ubiquinone. Couples the redox reaction to proton translocation (for every two electrons transferred, four hydrogen ions are translocated across the cytoplasmic membrane), and thus conserves the redox energy in a proton gradient. In Agrobacterium fabrum (strain C58 / ATCC 33970) (Agrobacterium tumefaciens (strain C58)), this protein is NADH-quinone oxidoreductase subunit B.